Here is a 195-residue protein sequence, read N- to C-terminus: DnaJ homolog subfamily C member 5 (195 aa).

Residues 13–82 (GDSLYIVLGL…RNIYDKYGSL (70 aa)) enclose the J domain. Positions 162–195 (DMEKEGDGAIVVQPTSATETTQLTSDSHPSYHTE) are disordered. Residues 174 to 189 (QPTSATETTQLTSDSH) show a composition bias toward polar residues.

Post-translationally, palmitoylated. Palmitoylation occurs probably in the cysteine-rich domain and regulates DNAJC5 stable membrane attachment.

The protein localises to the cytoplasm. Its subcellular location is the cytosol. It localises to the membrane. It is found in the cytoplasmic vesicle. The protein resides in the secretory vesicle. The protein localises to the chromaffin granule membrane. Its subcellular location is the melanosome. It localises to the cell membrane. Its function is as follows. May have an important role in presynaptic function. May be involved in calcium-dependent neurotransmitter release at nerve endings. The sequence is that of DnaJ homolog subfamily C member 5 from Tetronarce californica (Pacific electric ray).